A 111-amino-acid polypeptide reads, in one-letter code: Small ribosomal subunit protein bS6 (111 aa).

This sequence belongs to the bacterial ribosomal protein bS6 family.

Its function is as follows. Binds together with bS18 to 16S ribosomal RNA. This is Small ribosomal subunit protein bS6 from Francisella tularensis subsp. tularensis (strain FSC 198).